An 88-amino-acid polypeptide reads, in one-letter code: YcgL domain-containing protein HI_1446 (88 aa).

In terms of domain architecture, YcgL spans Met1–Ser85.

In Haemophilus influenzae (strain ATCC 51907 / DSM 11121 / KW20 / Rd), this protein is YcgL domain-containing protein HI_1446.